Reading from the N-terminus, the 187-residue chain is UPF0340 protein SPD_0576 (187 aa).

Belongs to the UPF0340 family.

The chain is UPF0340 protein SPD_0576 from Streptococcus pneumoniae serotype 2 (strain D39 / NCTC 7466).